The sequence spans 589 residues: Transmembrane 9 superfamily member 1 (589 aa).

The signal sequence occupies residues 1-24 (MPSSSSAAVLVFLLLVSLLTPTFA). Residues 25-222 (SDSDHKYQAE…YPFFEHQIHW (198 aa)) lie on the Lumenal side of the membrane. A helical transmembrane segment spans residues 223–243 (FSIFNSFMMVIFLTGLVSMIL). The Cytoplasmic portion of the chain corresponds to 244-293 (MRTLRNDYAKYAREDDDLESLERDVSEESGWKLVHGDVFRPASSLVLLSA). Residues 294-314 (VVGTGAQLALLVLLVILMAIV) traverse the membrane as a helical segment. The Lumenal portion of the chain corresponds to 315–321 (GTLYVGR). Residues 322–342 (GAIVTTFIVCYALTSFVSGYV) form a helical membrane-spanning segment. Over 343–364 (SGGMYSRSGGKHWIKCMVLTAS) the chain is Cytoplasmic. The helical transmembrane segment at 365–385 (LFPFLCFGIGFLLNTIAIFYG) threads the bilayer. At 386-395 (SLAAIPFGTM) the chain is on the lumenal side. Residues 396–416 (VVVFVIWGFISFPLALLGTVV) form a helical membrane-spanning segment. Over 417 to 448 (GRNWSGAPNNPCRVKTIPRPIPEKKWYLTPSV) the chain is Cytoplasmic. A helical transmembrane segment spans residues 449-469 (VSLMGGLLPFGSIFIEMYFVF). The Lumenal portion of the chain corresponds to 470–481 (TSFWNYKVYYVY). A helical transmembrane segment spans residues 482 to 502 (GFMLLVFVILVIVTVCVTIVG). The Cytoplasmic segment spans residues 503–518 (TYFLLNAENYHWQWTS). The chain crosses the membrane as a helical span at residues 519–539 (FFSAASTAVYVYLYSIYYYYV). The Lumenal portion of the chain corresponds to 540-550 (KTKMSGFFQTS). Residues 551–571 (FYFGYTMMFCLGLGILCGAVG) traverse the membrane as a helical segment. At 572-589 (YLGSNLFVRRIYRNIKCD) the chain is on the cytoplasmic side. An Endoplasmic reticulum export signal motif is present at residues 578–583 (FVRRIY). The Golgi retention signal signature appears at 587-589 (KCD).

It belongs to the nonaspanin (TM9SF) (TC 9.A.2) family. Ubiquitous.

The protein resides in the endosome membrane. The protein localises to the golgi apparatus membrane. This is Transmembrane 9 superfamily member 1 from Arabidopsis thaliana (Mouse-ear cress).